Reading from the N-terminus, the 1380-residue chain is Hepatocyte growth factor receptor (1380 aa).

The first 24 residues, M1–G24, serve as a signal peptide directing secretion. At E25–T931 the chain is on the extracellular side. Residues R27–L513 enclose the Sema domain. N-linked (GlcNAc...) asparagine glycosylation occurs at N45. 4 cysteine pairs are disulfide-bonded: C95/C101, C98/C156, C129/C137, and C170/C173. N200 is a glycosylation site (N-linked (GlcNAc...) asparagine). Cystine bridges form between C296/C361 and C383/C395. N-linked (GlcNAc...) asparagine glycans are attached at residues N397 and N403. Cystine bridges form between C518–C536, C524–C559, C527–C543, and C539–C549. N551 is a glycosylation site (N-linked (GlcNAc...) asparagine). IPT/TIG domains follow at residues P561–V654, P656–Q738, and P741–V835. O-linked (Man) threonine glycosylation is present at T580. Residues N592, N605, and N633 are each glycosylated (N-linked (GlcNAc...) asparagine). Residues T675 and T760 are each glycosylated (O-linked (Man) threonine). 3 N-linked (GlcNAc...) asparagine glycosylation sites follow: N784, N878, and N929. Residues G932–L954 traverse the membrane as a helical segment. Over K955–T1380 the chain is Cytoplasmic. S965 carries the phosphoserine modification. The residue at position 976 (T976) is a Phosphothreonine. Phosphoserine is present on residues S989, S996, and S999. The residue at position 1002 (Y1002) is a Phosphotyrosine. The Protein kinase domain occupies V1077–I1344. ATP-binding positions include I1083–V1091 and K1109. Catalysis depends on D1203, which acts as the Proton acceptor. The interaction with RANBP9 stretch occupies residues L1211 to T1380. Y1229 bears the Phosphotyrosine mark. Residues Y1233 and Y1234 each carry the phosphotyrosine; by autocatalysis modification. T1288 is subject to Phosphothreonine. The tract at residues W1319–V1358 is interaction with MUC20. Phosphotyrosine; by autocatalysis is present on residues Y1348 and Y1355. The residue at position 1364 (Y1364) is a Phosphotyrosine.

The protein belongs to the protein kinase superfamily. Tyr protein kinase family. In terms of assembly, heterodimer made of an alpha chain (50 kDa) and a beta chain (145 kDa) which are disulfide linked. Binds PLXNB1. Interacts when phosphorylated with downstream effectors including STAT3, PIK3R1, SRC, PCLG1, GRB2 and GAB1. Interacts with SPSB1, SPSB2 and SPSB4. Interacts with INPP5D/SHIP1. When phosphorylated at Tyr-1355, interacts with INPPL1/SHIP2. Interacts with RANBP9 and RANBP10, as well as SPSB1, SPSB2, SPSB3 and SPSB4. SPSB1 binding occurs in the presence and in the absence of HGF, however HGF treatment has a positive effect on this interaction. Interacts with MUC20; prevents interaction with GRB2 and suppresses hepatocyte growth factor-induced cell proliferation. Interacts with GRB10. Interacts with PTPN1 and PTPN2. Interacts with HSP90AA1 and HSP90AB1; the interaction suppresses MET kinase activity. Interacts with tensin TNS3. Interacts (when phosphorylated) with tensin TNS4 (via SH2 domain); the interaction increases MET protein stability by inhibiting MET endocytosis and subsequent lysosomal degradation. Autophosphorylated in response to ligand binding on Tyr-1233 and Tyr-1234 in the kinase domain leading to further phosphorylation of Tyr-1348 and Tyr-1355 in the C-terminal multifunctional docking site. Dephosphorylated by PTPRJ at Tyr-1348 and Tyr-1364. Dephosphorylated by PTPN1 and PTPN2. In terms of processing, ubiquitinated. Ubiquitination by CBL regulates the receptor stability and activity through proteasomal degradation. Post-translationally, O-mannosylation of IPT/TIG domains by TMEM260 is required for protein maturation. O-mannosylated residues are composed of single mannose glycans that are not elongated or modified.

It is found in the membrane. It catalyses the reaction L-tyrosyl-[protein] + ATP = O-phospho-L-tyrosyl-[protein] + ADP + H(+). In its inactive state, the C-terminal tail interacts with the catalytic domain and inhibits the kinase activity. Upon ligand binding, the C-terminal tail is displaced and becomes phosphorylated, thus increasing the kinase activity. Its function is as follows. Receptor tyrosine kinase that transduces signals from the extracellular matrix into the cytoplasm by binding to hepatocyte growth factor/HGF ligand. Regulates many physiological processes including proliferation, scattering, morphogenesis and survival. Ligand binding at the cell surface induces autophosphorylation of MET on its intracellular domain that provides docking sites for downstream signaling molecules. Following activation by ligand, interacts with the PI3-kinase subunit PIK3R1, PLCG1, SRC, GRB2, STAT3 or the adapter GAB1. Recruitment of these downstream effectors by MET leads to the activation of several signaling cascades including the RAS-ERK, PI3 kinase-AKT, or PLCgamma-PKC. The RAS-ERK activation is associated with the morphogenetic effects while PI3K/AKT coordinates prosurvival effects. During embryonic development, MET signaling plays a role in gastrulation, development and migration of muscles and neuronal precursors, angiogenesis and kidney formation. In adults, participates in wound healing as well as organ regeneration and tissue remodeling. Also promotes differentiation and proliferation of hematopoietic cells. This is Hepatocyte growth factor receptor (MET) from Echinops telfairi (Lesser hedgehog tenrec).